A 725-amino-acid chain; its full sequence is Kelch domain-containing protein SSO1033 (725 aa).

Positions 1-28 (MKYGNMKKWAPLILFLFSLLLLQGISLH) are cleaved as a signal peptide. Kelch repeat units follow at residues 59-100 (SLYI…VYNN), 101-145 (TIYV…VYNN), 146-199 (AIYV…FNGT), 201-248 (LIIV…YYRG), 250-297 (LFIV…QVGN), and 299-342 (LYLA…VTLG). Fibronectin type-III domains are found at residues 323–410 (PPLP…TPAS), 411–504 (VPNP…TKAS), 505–583 (VFAF…VVYY), and 585–665 (PPAS…TGDY).

In Saccharolobus solfataricus (strain ATCC 35092 / DSM 1617 / JCM 11322 / P2) (Sulfolobus solfataricus), this protein is Kelch domain-containing protein SSO1033.